A 376-amino-acid polypeptide reads, in one-letter code: Glutamate 5-kinase (376 aa).

Lys16 contacts ATP. 3 residues coordinate substrate: Ser56, Asp143, and Asn155. 175–176 (TD) contributes to the ATP binding site. Positions 283 to 361 (RGALSLDEGA…RDIETTLGYV (79 aa)) constitute a PUA domain.

Belongs to the glutamate 5-kinase family.

Its subcellular location is the cytoplasm. It catalyses the reaction L-glutamate + ATP = L-glutamyl 5-phosphate + ADP. Its pathway is amino-acid biosynthesis; L-proline biosynthesis; L-glutamate 5-semialdehyde from L-glutamate: step 1/2. In terms of biological role, catalyzes the transfer of a phosphate group to glutamate to form L-glutamate 5-phosphate. The protein is Glutamate 5-kinase of Halorhodospira halophila (strain DSM 244 / SL1) (Ectothiorhodospira halophila (strain DSM 244 / SL1)).